The chain runs to 333 residues: Mitochondrial glycine transporter (333 aa).

The disordered stretch occupies residues 1–25; that stretch reads MTNAATDKSVASVARDVSTGKPGKS. 3 Solcar repeats span residues 26 to 109, 127 to 220, and 236 to 319; these read PDAA…MRAA, LLPM…FKND, and RSSV…LIKS. 6 helical membrane-spanning segments follow: residues 32 to 57, 84 to 110, 133 to 158, 195 to 218, 240 to 266, and 294 to 312; these read LLSG…TRLQ, GAVP…RAAV, LATG…TRFE, GSVA…EGFK, INSS…KTRL, and GLSL…SWCI.

The protein belongs to the mitochondrial carrier (TC 2.A.29) family. SLC25A38 subfamily.

The protein resides in the mitochondrion inner membrane. It carries out the reaction glycine(in) = glycine(out). Its function is as follows. Mitochondrial glycine transporter that imports glycine into the mitochondrial matrix. Plays an important role in providing glycine for the first enzymatic step in heme biosynthesis, the condensation of glycine with succinyl-CoA to produce 5-aminolevulinate (ALA) in the mitochondrial matrix. The chain is Mitochondrial glycine transporter from Scheffersomyces stipitis (strain ATCC 58785 / CBS 6054 / NBRC 10063 / NRRL Y-11545) (Yeast).